A 146-amino-acid chain; its full sequence is Hemoglobin subunit beta (146 aa).

An N-acetylvaline modification is found at Val1. One can recognise a Globin domain in the interval 2–146; it reads HLTADEKAAV…VATALAHKYH (145 aa). Phosphothreonine is present on Thr12. A Phosphoserine modification is found at Ser44. Lys59 is modified (N6-acetyllysine). His63 is a heme b binding site. Position 82 is an N6-acetyllysine (Lys82). His92 provides a ligand contact to heme b. Cys93 is subject to S-nitrosocysteine. Lys144 is modified (N6-acetyllysine).

This sequence belongs to the globin family. As to quaternary structure, heterotetramer of two alpha chains and two beta chains. As to expression, red blood cells.

In terms of biological role, involved in oxygen transport from the lung to the various peripheral tissues. This is Hemoglobin subunit beta (HBB) from Cephalopachus bancanus (Western tarsier).